The following is a 1089-amino-acid chain: Translocase of chloroplast 120, chloroplastic (1089 aa).

G2 is modified (N-acetylglycine). 3 disordered regions span residues 158 to 179 (ATEDVNLENGNTHSSSENGVVS), 255 to 339 (TLSP…GLGR), and 353 to 381 (QPRVNGNVSHNQPQQAEDSTTAETDEHDE). Positions 165–176 (ENGNTHSSSENG) are enriched in polar residues. A phosphoserine mark is found at S179, S263, and S283. Basic and acidic residues predominate over residues 300–312 (EIKESQHMERESE). Residues 327–339 (AALPPARPAGLGR) show a composition bias toward low complexity. Over residues 353-374 (QPRVNGNVSHNQPQQAEDSTTA) the composition is skewed to polar residues. An AIG1-type G domain is found at 454 to 683 (DFSCTIMVLG…KLQDNIPGGQ (230 aa)). The G1 stretch occupies residues 463-470 (GKSGVGKS). Residues 466 to 471 (GVGKSA) and 485 to 490 (DAFQVG) each bind GTP. A Mg(2+)-binding site is contributed by S470. The segment at 485–488 (DAFQ) is homodimerization. The interval 489 to 493 (VGTKK) is G2. The tract at residues 510-513 (DTPG) is G3. The tract at residues 548-553 (RLDMQS) is homodimerization. The G4 stretch occupies residues 582-585 (THAA). Residues H583 and 631-632 (EN) contribute to the GTP site. Residues 631–633 (ENH) are G5. Positions 710–748 (PEQQYDDEDDEDDLDESSDSEEESEYDELPPFKRLTKAE) are disordered. Positions 713 to 737 (QYDDEDDEDDLDESSDSEEESEYDE) are enriched in acidic residues. Residues 767 to 788 (REKLFMKRQMKEERKRRKLLKK) are a coiled coil. The helical transmembrane segment at 1064 to 1080 (LAVVALVPLFKKLLTYY) threads the bilayer.

It belongs to the TRAFAC class TrmE-Era-EngA-EngB-Septin-like GTPase superfamily. AIG1/Toc34/Toc159-like paraseptin GTPase family. TOC159 subfamily. In terms of assembly, homodimer. Part of the TOC core complex that includes 1 protein for the specific recognition of transit peptides surrounded by a ring composed of four proteins forming translocation channels, and four to five GTP-binding proteins providing energy. This core complex can interact with components of the TIC complex to form a larger import complex. Chloroplastic protein precursor such as prSS (precursor of the RuBisCO small subunit) interacts with these complexes. The TOC complex contains a specific subset of polar lipids such as digalactosyldiacylglyceride (DGDG), phosphatidylcholine (PC) and phosphatidylglycerol (PG). Requires Mg(2+) as cofactor. In terms of processing, phosphorylated by KOC1. As to expression, expressed in seedlings, flowers, and roots.

It localises to the plastid. The protein localises to the chloroplast outer membrane. The protein resides in the cytoplasm. GTPase involved in protein precursor import into chloroplasts. Seems to recognize chloroplast-destined precursor proteins and regulate their presentation to the translocation channel through GTP hydrolysis. Probably specialized in the import of nuclear encoded non-photosynthetic preproteins from the cytoplasm to the chloroplast. The polypeptide is Translocase of chloroplast 120, chloroplastic (Arabidopsis thaliana (Mouse-ear cress)).